The primary structure comprises 337 residues: Cytoskeleton protein RodZ (337 aa).

At Met-1 to Gly-111 the chain is on the cytoplasmic side. One can recognise an HTH cro/C1-type domain in the interval Leu-19 to Leu-71. The H-T-H motif DNA-binding region spans Gln-30–Glu-49. Residues Trp-112–Trp-132 traverse the membrane as a helical; Signal-anchor for type II membrane protein segment. Residues Trp-133–Gln-337 lie on the Periplasmic side of the membrane. Residues Thr-145–Asn-167 are compositionally biased toward polar residues. The segment at Thr-145–Pro-237 is disordered. Low complexity predominate over residues Thr-168–Gln-207. The segment covering Asn-208–Val-218 has biased composition (polar residues). The segment covering Asp-219 to Pro-237 has biased composition (low complexity).

Belongs to the RodZ family.

The protein resides in the cell inner membrane. In terms of biological role, cytoskeletal protein that is involved in cell-shape control through regulation of the length of the long axis. This Escherichia coli (strain 55989 / EAEC) protein is Cytoskeleton protein RodZ.